Here is a 442-residue protein sequence, read N- to C-terminus: tRNA-2-methylthio-N(6)-dimethylallyladenosine synthase (442 aa).

One can recognise an MTTase N-terminal domain in the interval 6–122 (RKFYIHTFGC…LPVLIAEAGK (117 aa)). Positions 15, 51, 85, 157, 161, and 164 each coordinate [4Fe-4S] cluster. Residues 143–373 (RTQSLTAFVP…IDLQNGISAE (231 aa)) form the Radical SAM core domain. In terms of domain architecture, TRAM spans 376–439 (RLAIGSVVEV…SATLIGRAAE (64 aa)).

It belongs to the methylthiotransferase family. MiaB subfamily. As to quaternary structure, monomer. It depends on [4Fe-4S] cluster as a cofactor.

Its subcellular location is the cytoplasm. The catalysed reaction is N(6)-dimethylallyladenosine(37) in tRNA + (sulfur carrier)-SH + AH2 + 2 S-adenosyl-L-methionine = 2-methylsulfanyl-N(6)-dimethylallyladenosine(37) in tRNA + (sulfur carrier)-H + 5'-deoxyadenosine + L-methionine + A + S-adenosyl-L-homocysteine + 2 H(+). Its function is as follows. Catalyzes the methylthiolation of N6-(dimethylallyl)adenosine (i(6)A), leading to the formation of 2-methylthio-N6-(dimethylallyl)adenosine (ms(2)i(6)A) at position 37 in tRNAs that read codons beginning with uridine. This Chlorobium limicola (strain DSM 245 / NBRC 103803 / 6330) protein is tRNA-2-methylthio-N(6)-dimethylallyladenosine synthase.